We begin with the raw amino-acid sequence, 685 residues long: Putative lipase ROG1 (685 aa).

Residue Ser-269 is the Charge relay system of the active site.

The protein belongs to the putative lipase ROG1 family.

The polypeptide is Putative lipase ROG1 (ROG1) (Saccharomyces cerevisiae (strain ATCC 204508 / S288c) (Baker's yeast)).